The primary structure comprises 799 residues: MPERLAETLMDLWTPLIILWITLPSCVYTAPMNQAHVLTTGSPLELSRQSEDMRILSRSKRGWVWNQMFVLEEFSGPEPILVGRLHTDLDPGSKKIKYILSGDGAGTIFQINDITGDIHAIKRLDREEKAEYTLTAQAVDFETNKPLEPPSEFIIKVQDINDNAPEFLNGPYHATVPEMSILGTSVTNVTATDADDPVYGNSAKLVYSILEGQPYFSIEPETAIIKTALPNMDREAKEEYLVVIQAKDMGGHSGGLSGTTTLTVTLTDVNDNPPKFAQSLYHFSVPEDVVLGTAIGRVKANDQDIGENAQSSYDIIDGDGTALFEITSDAQAQDGVIRLRKPLDFETKKSYTLKVEAANIHIDPRFSSRGPFKDTATVKIVVEDADEPPVFSSPTYLLEVHENAALNSVIGQVTARDPDITSSPIRFSIDRHTDLERQFNINADDGKITLATPLDRELSVWHNITIIATEIRNHSQISRVPVAIKVLDVNDNAPEFASEYEAFLCENGKPGQVIQTVSAMDKDDPKNGHFFLYSLLPEMVNNPNFTIKKNEDNSLSILAKHNGFNRQKQEVYLLPIVISDSGNPPLSSTSTLTIRVCGCSNDGVVQSCNVEAYVLPIGLSMGALIAILACIILLLVIVVLFVTLRRHKNEPLIIKDDEDVRENIIRYDDEGGGEEDTEAFDIATLQNPDGINGFLPRKDIKPDLQFMPRQGLAPVPNGVDVDEFINVRLHEADNDPTAPPYDSIQIYGYEGRGSVAGSLSSLESTTSDSDQNFDYLSDWGPRFKRLGELYSVGESDKET.

An N-terminal signal peptide occupies residues 1–29; that stretch reads MPERLAETLMDLWTPLIILWITLPSCVYT. Positions 30 to 61 are excised as a propeptide; sequence APMNQAHVLTTGSPLELSRQSEDMRILSRSKR. Cadherin domains are found at residues 62 to 167, 168 to 276, 277 to 391, 392 to 494, and 495 to 616; these read GWVW…APEF, LNGP…PPKF, AQSL…PPVF, SSPT…DNAP, and EFAS…YVLP. Residues 62 to 621 are Extracellular-facing; it reads GWVWNQMFVL…AYVLPIGLSM (560 aa). The N-linked (GlcNAc...) asparagine glycan is linked to Asn-188. Residues Asn-463, Asn-473, and Asn-544 are each glycosylated (N-linked (GlcNAc...) asparagine). A helical transmembrane segment spans residues 622–642; it reads GALIAILACIILLLVIVVLFV. Residues 643–799 are Cytoplasmic-facing; the sequence is TLRRHKNEPL…YSVGESDKET (157 aa). Ser-795 is subject to Phosphoserine.

The protein resides in the cell membrane. Cadherins are calcium-dependent cell adhesion proteins. They preferentially interact with themselves in a homophilic manner in connecting cells; cadherins may thus contribute to the sorting of heterogeneous cell types. The polypeptide is Cadherin-8 (Cdh8) (Mus musculus (Mouse)).